The primary structure comprises 152 residues: Protein NrdI (152 aa).

The protein belongs to the NrdI family.

In terms of biological role, probably involved in ribonucleotide reductase function. This chain is Protein NrdI, found in Rhodococcus opacus (strain B4).